Reading from the N-terminus, the 194-residue chain is Crossover junction endodeoxyribonuclease RuvC (194 aa).

Residues D7, E68, and D141 contribute to the active site. Mg(2+) contacts are provided by D7, E68, and D141. Residues 162–194 are disordered; it reads GGEREQHLTAAQRQWAEAAQNSTRRRKNSDRGM. A compositionally biased stretch (basic residues) spans 184–194; the sequence is TRRRKNSDRGM.

The protein belongs to the RuvC family. Homodimer which binds Holliday junction (HJ) DNA. The HJ becomes 2-fold symmetrical on binding to RuvC with unstacked arms; it has a different conformation from HJ DNA in complex with RuvA. In the full resolvosome a probable DNA-RuvA(4)-RuvB(12)-RuvC(2) complex forms which resolves the HJ. The cofactor is Mg(2+).

The protein resides in the cytoplasm. The enzyme catalyses Endonucleolytic cleavage at a junction such as a reciprocal single-stranded crossover between two homologous DNA duplexes (Holliday junction).. The RuvA-RuvB-RuvC complex processes Holliday junction (HJ) DNA during genetic recombination and DNA repair. Endonuclease that resolves HJ intermediates. Cleaves cruciform DNA by making single-stranded nicks across the HJ at symmetrical positions within the homologous arms, yielding a 5'-phosphate and a 3'-hydroxyl group; requires a central core of homology in the junction. The consensus cleavage sequence is 5'-(A/T)TT(C/G)-3'. Cleavage occurs on the 3'-side of the TT dinucleotide at the point of strand exchange. HJ branch migration catalyzed by RuvA-RuvB allows RuvC to scan DNA until it finds its consensus sequence, where it cleaves and resolves the cruciform DNA. This Bifidobacterium longum subsp. infantis (strain ATCC 15697 / DSM 20088 / JCM 1222 / NCTC 11817 / S12) protein is Crossover junction endodeoxyribonuclease RuvC.